We begin with the raw amino-acid sequence, 160 residues long: UPF0262 protein BSUIS_A0274 (160 aa).

It belongs to the UPF0262 family.

The sequence is that of UPF0262 protein BSUIS_A0274 from Brucella suis (strain ATCC 23445 / NCTC 10510).